A 438-amino-acid chain; its full sequence is Delta(14)-sterol reductase ERG24 (438 aa).

Residues methionine 1 to glutamate 13 are Lumenal-facing. Residues phenylalanine 14 to leucine 34 traverse the membrane as a helical segment. The Cytoplasmic portion of the chain corresponds to asparagine 35–glutamate 71. A helical transmembrane segment spans residues leucine 72–leucine 90. Residues proline 91 to lysine 109 are Lumenal-facing. Residues isoleucine 110–tryptophan 127 form a helical membrane-spanning segment. The Cytoplasmic portion of the chain corresponds to lysine 128 to leucine 147. The helical transmembrane segment at cysteine 148–phenylalanine 172 threads the bilayer. The Lumenal segment spans residues lysine 173 to lysine 242. A helical transmembrane segment spans residues isoleucine 243–leucine 263. At asparagine 264–glutamate 308 the chain is on the cytoplasmic side. The helical transmembrane segment at leucine 309–phenylalanine 328 threads the bilayer. At histidine 329 to histidine 368 the chain is on the lumenal side. Residues lysine 335, arginine 339, leucine 358, tryptophan 363, asparagine 370–tyrosine 371, aspartate 410, cysteine 414–tyrosine 418, and tyrosine 425 contribute to the NADP(+) site. A helical membrane pass occupies residues isoleucine 369–phenylalanine 387. The Cytoplasmic portion of the chain corresponds to glutamine 388 to tyrosine 438.

The protein belongs to the ERG4/ERG24 family.

It localises to the membrane. It carries out the reaction 4,4-dimethyl-5alpha-cholesta-8,24-dien-3beta-ol + NADP(+) = 4,4-dimethyl-5alpha-cholesta-8,14,24-trien-3beta-ol + NADPH + H(+). Its pathway is steroid biosynthesis; zymosterol biosynthesis; zymosterol from lanosterol: step 2/6. Its activity is regulated as follows. Inhibited by the morpholine antifungal drug fenpropimorph. Delta(14)-sterol reductase; part of the third module of ergosterol biosynthesis pathway that includes the late steps of the pathway. ERG24 reduces the C14=C15 double bond of 4,4-dimethyl-cholesta-8,14,24-trienol to produce 4,4-dimethyl-cholesta-8,24-dienol. The third module or late pathway involves the ergosterol synthesis itself through consecutive reactions that mainly occur in the endoplasmic reticulum (ER) membrane. Firstly, the squalene synthase ERG9 catalyzes the condensation of 2 farnesyl pyrophosphate moieties to form squalene, which is the precursor of all steroids. Squalene synthase is crucial for balancing the incorporation of farnesyl diphosphate (FPP) into sterol and nonsterol isoprene synthesis. Secondly, the squalene epoxidase ERG1 catalyzes the stereospecific oxidation of squalene to (S)-2,3-epoxysqualene, which is considered to be a rate-limiting enzyme in steroid biosynthesis. Then, the lanosterol synthase ERG7 catalyzes the cyclization of (S)-2,3 oxidosqualene to lanosterol, a reaction that forms the sterol core. In the next steps, lanosterol is transformed to zymosterol through a complex process involving various demethylation, reduction and desaturation reactions. The lanosterol 14-alpha-demethylase ERG11 (also known as CYP51) catalyzes C14-demethylation of lanosterol to produce 4,4'-dimethyl cholesta-8,14,24-triene-3-beta-ol, which is critical for ergosterol biosynthesis. The C-14 reductase ERG24 reduces the C14=C15 double bond of 4,4-dimethyl-cholesta-8,14,24-trienol to produce 4,4-dimethyl-cholesta-8,24-dienol. 4,4-dimethyl-cholesta-8,24-dienol is substrate of the C-4 demethylation complex ERG25-ERG26-ERG27 in which ERG25 catalyzes the three-step monooxygenation required for the demethylation of 4,4-dimethyl and 4alpha-methylsterols, ERG26 catalyzes the oxidative decarboxylation that results in a reduction of the 3-beta-hydroxy group at the C-3 carbon to an oxo group, and ERG27 is responsible for the reduction of the keto group on the C-3. ERG28 has a role as a scaffold to help anchor ERG25, ERG26 and ERG27 to the endoplasmic reticulum and ERG29 regulates the activity of the iron-containing C4-methylsterol oxidase ERG25. Then, the sterol 24-C-methyltransferase ERG6 catalyzes the methyl transfer from S-adenosyl-methionine to the C-24 of zymosterol to form fecosterol. The C-8 sterol isomerase ERG2 catalyzes the reaction which results in unsaturation at C-7 in the B ring of sterols and thus converts fecosterol to episterol. The sterol-C5-desaturase ERG3 then catalyzes the introduction of a C-5 double bond in the B ring to produce 5-dehydroepisterol. The C-22 sterol desaturase ERG5 further converts 5-dehydroepisterol into ergosta-5,7,22,24(28)-tetraen-3beta-ol by forming the C-22(23) double bond in the sterol side chain. Finally, ergosta-5,7,22,24(28)-tetraen-3beta-ol is substrate of the C-24(28) sterol reductase ERG4 to produce ergosterol. This is Delta(14)-sterol reductase ERG24 from Saccharomyces cerevisiae (strain ATCC 204508 / S288c) (Baker's yeast).